We begin with the raw amino-acid sequence, 57 residues long: Granulin-3 (57 aa).

2 disulfide bridges follow: cysteine 4–cysteine 16 and cysteine 10–cysteine 26.

The protein belongs to the granulin family. In terms of processing, granulins are disulfide bridged. As to expression, ubiquitous.

Its subcellular location is the secreted. Its function is as follows. Granulins have possible cytokine-like activity. They may play a role in inflammation, wound repair, and tissue remodeling. In Cyprinus carpio (Common carp), this protein is Granulin-3.